A 293-amino-acid polypeptide reads, in one-letter code: SAGA-associated factor 29 (293 aa).

A coiled-coil region spans residues 12–88; that stretch reads ELLAELQRLL…KALDKIAEIK (77 aa). One can recognise an SGF29 C-terminal domain in the interval 152–293; that stretch reads GDYVAKPGDK…VVACKETKKK (142 aa). 2 histone H3K4me3 N-terminus binding regions span residues 194–196 and 240–243; these read DID and QTTC. The interval 264–266 is histone H3K4me3 binding; the sequence is FED.

It belongs to the SGF29 family. In terms of assembly, interacts with dimethylated and trimethylated 'Lys-4' of histone H3 (H3K4me2 and H3K4me3), with a preference for the trimethylated form (H3K4me3). Component of some SAGA-type complexes. Component of the ADA2A-containing complex (ATAC).

The protein localises to the nucleus. Chromatin reader component of some histone acetyltransferase (HAT) SAGA-type complexes like the TFTC-HAT, ATAC or STAGA complexes. SGF29 specifically recognizes and binds methylated 'Lys-4' of histone H3 (H3K4me), with a preference for trimethylated form (H3K4me3). In the SAGA-type complexes, SGF29 is required to recruit complexes to H3K4me. Also binds non-histone proteins that are methylated on Lys residues. The polypeptide is SAGA-associated factor 29 (Gallus gallus (Chicken)).